Reading from the N-terminus, the 394-residue chain is Large ribosomal subunit protein mL44 (394 aa).

Residues 1-21 (MFRHVAQNLGSRNTSIQSYRL) constitute a mitochondrion transit peptide.

It belongs to the ribonuclease III family. Mitochondrion-specific ribosomal protein mL44 subfamily. As to quaternary structure, component of the mitochondrial large ribosomal subunit (mt-LSU).

It localises to the mitochondrion. Functionally, component of the mitochondrial ribosome. May have a function in the assembly/stability of nascent mitochondrial polypeptides exiting the ribosome. The polypeptide is Large ribosomal subunit protein mL44 (Caenorhabditis elegans).